The sequence spans 469 residues: Calcium-binding mitochondrial carrier protein SCaMC-2-A (469 aa).

The Mitochondrial intermembrane segment spans residues 1 to 189 (MLCLCLYVPV…EHLTGMWWRH (189 aa)). EF-hand domains lie at 47 to 80 (TYRR…QDHE), 78 to 113 (DHEK…LGVH), and 114 to 149 (ISLK…QPAE). Residues Asp64, Gln66, and Glu71 each coordinate Ca(2+). 3 Solcar repeats span residues 184–270 (GMWW…IKRV), 278–363 (LGIS…LKNT), and 375–463 (PGVF…IKST). Residues 190–207 (LVSGGGAGAVSRTCTAPL) traverse the membrane as a helical segment. The Mitochondrial matrix portion of the chain corresponds to 208–244 (DRLKVLMQVHGCQGKSMCLMSGLTQMIKEGGVRSLWR). Residues 245-264 (GNGINVIKIAPETALKFMAY) traverse the membrane as a helical segment. Topologically, residues 265-287 (EQIKRVMGSSQETLGISERFVAG) are mitochondrial intermembrane. The helical transmembrane segment at 288 to 301 (SLAGVIAQSTIYPM) threads the bilayer. The Mitochondrial matrix portion of the chain corresponds to 302 to 337 (EVLKTRLALRKTGQYKGISDCAKHILKTEGMSAFYK). The chain crosses the membrane as a helical span at residues 338-357 (GYVPNMLGIIPYAGIDLAVY). Residues 358–380 (ETLKNTWLQRYGTENADPGVFVL) are Mitochondrial intermembrane-facing. A helical membrane pass occupies residues 381–398 (LACGTVSSTCGQLASYPL). The Mitochondrial matrix segment spans residues 399-437 (ALIRTRMQAQASVEGSSQVSMTGLFKQIMKTEGPTGLYR). A helical transmembrane segment spans residues 438–457 (GLTPNFLKVIPAVSISYVVY). The Mitochondrial intermembrane segment spans residues 458–469 (EHIKSTLGVRSR).

It belongs to the mitochondrial carrier (TC 2.A.29) family.

It localises to the mitochondrion inner membrane. Calcium-dependent mitochondrial solute carrier. This Danio rerio (Zebrafish) protein is Calcium-binding mitochondrial carrier protein SCaMC-2-A (slc25a25a).